A 229-amino-acid chain; its full sequence is Uracil-DNA glycosylase (229 aa).

The Proton acceptor role is filled by Asp-70.

It belongs to the uracil-DNA glycosylase (UDG) superfamily. UNG family.

It localises to the cytoplasm. The enzyme catalyses Hydrolyzes single-stranded DNA or mismatched double-stranded DNA and polynucleotides, releasing free uracil.. Its function is as follows. Excises uracil residues from the DNA which can arise as a result of misincorporation of dUMP residues by DNA polymerase or due to deamination of cytosine. In Chlamydia felis (strain Fe/C-56) (Chlamydophila felis), this protein is Uracil-DNA glycosylase.